A 550-amino-acid polypeptide reads, in one-letter code: Probable asparagine synthetase [glutamine-hydrolyzing] (550 aa).

The For GATase activity role is filled by Cys-2. The 188-residue stretch at 2–189 (CGIICFIQYG…PNQYVTIDLS (188 aa)) folds into the Glutamine amidotransferase type-2 domain. Residues 53–57 (RLAIM), 78–80 (NGE), and Asp-100 contribute to the L-glutamine site. An Asparagine synthetase domain is found at 213–530 (YYQSHKSLID…GGRDHIIPHY (318 aa)). ATP-binding positions include Leu-256, Val-284, and 360-361 (SG).

It carries out the reaction L-aspartate + L-glutamine + ATP + H2O = L-asparagine + L-glutamate + AMP + diphosphate + H(+). Its pathway is amino-acid biosynthesis; L-asparagine biosynthesis; L-asparagine from L-aspartate (L-Gln route): step 1/1. The chain is Probable asparagine synthetase [glutamine-hydrolyzing] from Acanthamoeba polyphaga mimivirus (APMV).